A 200-amino-acid chain; its full sequence is MTIRYPNGKRYNQASQPHKTPIKKHTYSNRGMSLEEELNETNEYYLTHNIACVHKKPTPLQIVKVDYPARSAAVVKEAYFKQPSTTDYNGVYKGKYIDFEAKETKNKTSFPLQNFHLHQIEHMKQVIAHNGIAFVIIKFTLFDELYLLDAKHIITFWNRQNTGGRKSITKEEIVEHGSLLSCGYHPRIDYIRVLDTVYFS.

The disordered stretch occupies residues 1-25 (MTIRYPNGKRYNQASQPHKTPIKKH). 4 residues coordinate Mg(2+): Thr85, Asp87, Glu100, and Gln119.

The protein belongs to the RecU family. The cofactor is Mg(2+).

The protein localises to the cytoplasm. The catalysed reaction is Endonucleolytic cleavage at a junction such as a reciprocal single-stranded crossover between two homologous DNA duplexes (Holliday junction).. Endonuclease that resolves Holliday junction intermediates in genetic recombination. Cleaves mobile four-strand junctions by introducing symmetrical nicks in paired strands. Promotes annealing of linear ssDNA with homologous dsDNA. Required for DNA repair, homologous recombination and chromosome segregation. In Bacillus cereus (strain ZK / E33L), this protein is Holliday junction resolvase RecU.